Reading from the N-terminus, the 420-residue chain is Probable acetate kinase (420 aa).

Residue Asn-10 participates in Mg(2+) binding. Lys-17 contacts ATP. Substrate is bound at residue Arg-97. The active-site Proton donor/acceptor is Asp-153. 213–217 is a binding site for ATP; the sequence is HIGSG. Glu-403 contacts Mg(2+).

This sequence belongs to the acetokinase family. It depends on Mg(2+) as a cofactor.

It carries out the reaction acetate + ATP = acetyl phosphate + ADP. The protein operates within metabolic intermediate biosynthesis; acetyl-CoA biosynthesis; acetyl-CoA from acetate: step 1/2. This chain is Probable acetate kinase, found in Emericella nidulans (strain FGSC A4 / ATCC 38163 / CBS 112.46 / NRRL 194 / M139) (Aspergillus nidulans).